The primary structure comprises 376 residues: uncharacterized protein (376 aa).

This sequence belongs to the mimivirus R1 family.

This is an uncharacterized protein from Acanthamoeba polyphaga (Amoeba).